The chain runs to 311 residues: Methionyl-tRNA formyltransferase (311 aa).

(6S)-5,6,7,8-tetrahydrofolate is bound at residue 109 to 112 (SLLP).

Belongs to the Fmt family.

The enzyme catalyses L-methionyl-tRNA(fMet) + (6R)-10-formyltetrahydrofolate = N-formyl-L-methionyl-tRNA(fMet) + (6S)-5,6,7,8-tetrahydrofolate + H(+). In terms of biological role, attaches a formyl group to the free amino group of methionyl-tRNA(fMet). The formyl group appears to play a dual role in the initiator identity of N-formylmethionyl-tRNA by promoting its recognition by IF2 and preventing the misappropriation of this tRNA by the elongation apparatus. This is Methionyl-tRNA formyltransferase from Staphylococcus aureus (strain JH1).